The sequence spans 437 residues: Adenosylhomocysteinase (437 aa).

3 residues coordinate substrate: Thr-54, Asp-130, and Glu-155. 156-158 is a binding site for NAD(+); it reads TTT. Positions 185 and 189 each coordinate substrate. Residues Asn-190, 219 to 224, Glu-242, Asn-277, 298 to 300, and Asn-345 each bind NAD(+); these read GYGDVG and IGH.

The protein belongs to the adenosylhomocysteinase family. In terms of assembly, homotetramer. The cofactor is NAD(+).

The protein localises to the cytoplasm. It carries out the reaction S-adenosyl-L-homocysteine + H2O = L-homocysteine + adenosine. It functions in the pathway amino-acid biosynthesis; L-homocysteine biosynthesis; L-homocysteine from S-adenosyl-L-homocysteine: step 1/1. Adenosylhomocysteine is a competitive inhibitor of S-adenosyl-L-methionine-dependent methyl transferase reactions; therefore adenosylhomocysteinase may play a key role in the control of methylations via regulation of the intracellular concentration of adenosylhomocysteine. The chain is Adenosylhomocysteinase from Leishmania donovani.